Here is a 562-residue protein sequence, read N- to C-terminus: NAD-dependent malic enzyme (562 aa).

The Proton donor role is filled by tyrosine 101. Arginine 154 provides a ligand contact to NAD(+). The active-site Proton acceptor is lysine 172. A divalent metal cation is bound by residues glutamate 243, aspartate 244, and aspartate 267. NAD(+)-binding residues include aspartate 267 and asparagine 415.

This sequence belongs to the malic enzymes family. As to quaternary structure, homotetramer. It depends on Mg(2+) as a cofactor. The cofactor is Mn(2+).

The enzyme catalyses (S)-malate + NAD(+) = pyruvate + CO2 + NADH. It catalyses the reaction oxaloacetate + H(+) = pyruvate + CO2. The chain is NAD-dependent malic enzyme from Shewanella sediminis (strain HAW-EB3).